The primary structure comprises 407 residues: Argininosuccinate synthase (407 aa).

ATP is bound by residues 10-18 and Ala37; that span reads AYSGGLDTS. Residues Tyr88 and Ser93 each coordinate L-citrulline. Gly118 provides a ligand contact to ATP. Residues Thr120, Asn124, and Asp125 each contribute to the L-aspartate site. Asn124 is a binding site for L-citrulline. L-citrulline is bound by residues Arg128, Ser179, Ser188, Glu264, and Tyr276.

This sequence belongs to the argininosuccinate synthase family. Type 1 subfamily. Homotetramer.

The protein localises to the cytoplasm. It catalyses the reaction L-citrulline + L-aspartate + ATP = 2-(N(omega)-L-arginino)succinate + AMP + diphosphate + H(+). It functions in the pathway amino-acid biosynthesis; L-arginine biosynthesis; L-arginine from L-ornithine and carbamoyl phosphate: step 2/3. The polypeptide is Argininosuccinate synthase (Jannaschia sp. (strain CCS1)).